Here is a 270-residue protein sequence, read N- to C-terminus: Cbp/p300-interacting transactivator 2 (270 aa).

Residues 138 to 201 form a disordered region; the sequence is LHPAAGHQMN…SGGGSGSGNM (64 aa). A compositionally biased stretch (gly residues) spans 165–198; the sequence is STPGGSGGSSTPGGSGSSSGGGAGSSNSGGGSGS.

It belongs to the CITED family. In terms of assembly, interacts (via C-terminus) with SMAD2. Interacts (via C-terminus) with SMAD3 (via MH2 domain). Interacts with LHX2 (via LIM domains). Interacts with WT1. Interacts (via C-terminus) with EP300 (via CH1 domain); the interaction is stimulated in response to hypoxia. Interacts with PPARA. Interacts (via C-terminus) with TFAP2A, TFAP2B and TFAP2C.

The protein localises to the nucleus. Functionally, transcriptional coactivator of the p300/CBP-mediated transcription complex. Acts as a bridge, linking TFAP2 transcription factors and the p300/CBP transcriptional coactivator complex in order to stimulate TFAP2-mediated transcriptional activation. Positively regulates TGF-beta signaling through its association with the SMAD/p300/CBP-mediated transcriptional coactivator complex. Stimulates the peroxisome proliferator-activated receptors PPARA transcriptional activity. Enhances estrogen-dependent transactivation mediated by estrogen receptors. Also acts as a transcriptional corepressor; interferes with the binding of the transcription factors HIF1A or STAT2 and the p300/CBP transcriptional coactivator complex. Participates in sex determination and early gonad development by stimulating transcription activation of SRY. Plays a role in controlling left-right patterning during embryogenesis; potentiates transcriptional activation of NODAL-mediated gene transcription in the left lateral plate mesoderm (LPM). Plays an essential role in differentiation of the adrenal cortex from the adrenogonadal primordium (AGP); stimulates WT1-mediated transcription activation thereby up-regulating the nuclear hormone receptor NR5A1 promoter activity. Associates with chromatin to the PITX2 P1 promoter region. This chain is Cbp/p300-interacting transactivator 2 (CITED2), found in Homo sapiens (Human).